The primary structure comprises 227 residues: Cytochrome c oxidase subunit 2 (227 aa).

The Mitochondrial intermembrane segment spans residues 1-14 (MAYPFQLGLQDATS). The helical transmembrane segment at 15–45 (PIMEELTNFHDHTLMIVFLISSLVLYIISLM) threads the bilayer. Over 46–59 (LTTKLTHTSTMDAQ) the chain is Mitochondrial matrix. Residues 60–87 (EVETIWTILPAAILILIALPSLRILYMM) traverse the membrane as a helical segment. Residues 88–227 (DEINNPVLTV…YFENWSTSMI (140 aa)) lie on the Mitochondrial intermembrane side of the membrane. Cu cation is bound by residues histidine 161, cysteine 196, glutamate 198, cysteine 200, histidine 204, and methionine 207. Glutamate 198 is a binding site for Mg(2+). Residue tyrosine 218 is modified to Phosphotyrosine.

Belongs to the cytochrome c oxidase subunit 2 family. In terms of assembly, component of the cytochrome c oxidase (complex IV, CIV), a multisubunit enzyme composed of 14 subunits. The complex is composed of a catalytic core of 3 subunits MT-CO1, MT-CO2 and MT-CO3, encoded in the mitochondrial DNA, and 11 supernumerary subunits COX4I, COX5A, COX5B, COX6A, COX6B, COX6C, COX7A, COX7B, COX7C, COX8 and NDUFA4, which are encoded in the nuclear genome. The complex exists as a monomer or a dimer and forms supercomplexes (SCs) in the inner mitochondrial membrane with NADH-ubiquinone oxidoreductase (complex I, CI) and ubiquinol-cytochrome c oxidoreductase (cytochrome b-c1 complex, complex III, CIII), resulting in different assemblies (supercomplex SCI(1)III(2)IV(1) and megacomplex MCI(2)III(2)IV(2)). Found in a complex with TMEM177, COA6, COX18, COX20, SCO1 and SCO2. Interacts with TMEM177 in a COX20-dependent manner. Interacts with COX20. Interacts with COX16. Requires Cu cation as cofactor.

Its subcellular location is the mitochondrion inner membrane. It catalyses the reaction 4 Fe(II)-[cytochrome c] + O2 + 8 H(+)(in) = 4 Fe(III)-[cytochrome c] + 2 H2O + 4 H(+)(out). Functionally, component of the cytochrome c oxidase, the last enzyme in the mitochondrial electron transport chain which drives oxidative phosphorylation. The respiratory chain contains 3 multisubunit complexes succinate dehydrogenase (complex II, CII), ubiquinol-cytochrome c oxidoreductase (cytochrome b-c1 complex, complex III, CIII) and cytochrome c oxidase (complex IV, CIV), that cooperate to transfer electrons derived from NADH and succinate to molecular oxygen, creating an electrochemical gradient over the inner membrane that drives transmembrane transport and the ATP synthase. Cytochrome c oxidase is the component of the respiratory chain that catalyzes the reduction of oxygen to water. Electrons originating from reduced cytochrome c in the intermembrane space (IMS) are transferred via the dinuclear copper A center (CU(A)) of subunit 2 and heme A of subunit 1 to the active site in subunit 1, a binuclear center (BNC) formed by heme A3 and copper B (CU(B)). The BNC reduces molecular oxygen to 2 water molecules using 4 electrons from cytochrome c in the IMS and 4 protons from the mitochondrial matrix. The polypeptide is Cytochrome c oxidase subunit 2 (MT-CO2) (Arvicanthis somalicus (Neumann's grass rat)).